An 874-amino-acid polypeptide reads, in one-letter code: Alanine--tRNA ligase (874 aa).

Zn(2+) is bound by residues His-564, His-568, Cys-665, and His-669.

This sequence belongs to the class-II aminoacyl-tRNA synthetase family. The cofactor is Zn(2+).

The protein localises to the cytoplasm. It carries out the reaction tRNA(Ala) + L-alanine + ATP = L-alanyl-tRNA(Ala) + AMP + diphosphate. Functionally, catalyzes the attachment of alanine to tRNA(Ala) in a two-step reaction: alanine is first activated by ATP to form Ala-AMP and then transferred to the acceptor end of tRNA(Ala). Also edits incorrectly charged Ser-tRNA(Ala) and Gly-tRNA(Ala) via its editing domain. The protein is Alanine--tRNA ligase of Paraburkholderia phytofirmans (strain DSM 17436 / LMG 22146 / PsJN) (Burkholderia phytofirmans).